Here is a 251-residue protein sequence, read N- to C-terminus: Cathelicidin-B1 (251 aa).

A signal peptide spans 1–20; the sequence is MGRMWASEVLLLLLLGSSRA. Positions 21 to 211 are excised as a propeptide; sequence VTPGLDVSTA…ELRCRPLRPQ (191 aa). The tract at residues 29-109 is disordered; it reads TAPGLDGSIP…TITPKQDGSI (81 aa). Intrachain disulfides connect Cys172–Cys181 and Cys189–Cys205.

This sequence belongs to the cathelicidin family. Detected in bursa of Fabricius, in filamentous structures surrounding the basal and lateral surfaces of bursal M cells (at protein level). Detected in bursa of Fabricius, in secretory enterocytes of the interfollicular bursal epithelium, but not in M cells.

Its subcellular location is the secreted. Its function is as follows. Has potent antimicrobial activity against Gram-positive and Gram-negative bacteria (in vitro). May play a role in the innate immune response. The sequence is that of Cathelicidin-B1 (CATHB1) from Gallus gallus (Chicken).